Reading from the N-terminus, the 329-residue chain is uncharacterized protein (329 aa).

A signal peptide spans 1-22 (MPLCNNFSGNLVVAVALFFAGA).

This is an uncharacterized protein from Arabidopsis thaliana (Mouse-ear cress).